The sequence spans 593 residues: High affinity cGMP-specific 3',5'-cyclic phosphodiesterase 9A (593 aa).

The tract at residues 87–142 is disordered; that stretch reads SAGVEDKRTTSRGQSAERPLRDRRVVGLEQPRREGAFESGQVEPRPREPQGCCQEG. The segment covering 104-122 has biased composition (basic and acidic residues); it reads RPLRDRRVVGLEQPRREGA. Residues 236–557 form the PDEase domain; that stretch reads PRRDVPTYPK…DRYEELKRID (322 aa). His312 acts as the Proton donor in catalysis. 312 to 316 contacts 3',5'-cyclic GMP; that stretch reads HNFRH. Zn(2+) contacts are provided by His316, His352, and Asp353. A 3',5'-cyclic GMP-binding site is contributed by Asp353. Asp353 is a Mg(2+) binding site. At Ser379 the chain carries Phosphoserine. Residues Asp462, Tyr484, and 512–513 each bind 3',5'-cyclic GMP; that span reads AQ. Asp462 contributes to the Zn(2+) binding site. The segment at 564 to 593 is disordered; it reads QKKTDSLTSGATEKSRERSRDVKNSEGDCA. Basic and acidic residues predominate over residues 576–593; sequence EKSRERSRDVKNSEGDCA.

It belongs to the cyclic nucleotide phosphodiesterase family. PDE9 subfamily. Homodimer. It depends on Zn(2+) as a cofactor. Mg(2+) is required as a cofactor.

It is found in the cell projection. The protein resides in the ruffle membrane. The protein localises to the cytoplasm. Its subcellular location is the perinuclear region. It localises to the golgi apparatus. It is found in the endoplasmic reticulum. The protein resides in the cell membrane. The protein localises to the sarcolemma. The enzyme catalyses 3',5'-cyclic GMP + H2O = GMP + H(+). It functions in the pathway purine metabolism; 3',5'-cyclic GMP degradation; GMP from 3',5'-cyclic GMP: step 1/1. Its activity is regulated as follows. Specifically inhibited by a compound named 3r ((R)-2-((1-cyclopentyl-4-hydroxy-1H-pyrazolo[3,4-d]pyrimidin-6- yl)amino)-N-(4-methoxyphenyl)propanamide); the inhibitor forms a hydrogen bond with Tyr-484, Ala-512 and Gln-513. Specifically hydrolyzes the second messenger cGMP, which is a key regulator of many important physiological processes. Highly specific: compared to other members of the cyclic nucleotide phosphodiesterase family, has the highest affinity and selectivity for cGMP. Specifically regulates natriuretic-peptide-dependent cGMP signaling in heart, acting as a regulator of cardiac hypertrophy in myocytes and muscle. Does not regulate nitric oxide-dependent cGMP in heart. Additional experiments are required to confirm whether its ability to hydrolyze natriuretic-peptide-dependent cGMP is specific to heart or is a general feature of the protein. In brain, involved in cognitive function, such as learning and long-term memory. The polypeptide is High affinity cGMP-specific 3',5'-cyclic phosphodiesterase 9A (PDE9A) (Pan troglodytes (Chimpanzee)).